The primary structure comprises 214 residues: Small ribosomal subunit protein eS6 (214 aa).

The protein belongs to the eukaryotic ribosomal protein eS6 family.

This chain is Small ribosomal subunit protein eS6 (rps6e), found in Saccharolobus islandicus (strain Y.G.57.14 / Yellowstone #1) (Sulfolobus islandicus).